Consider the following 467-residue polypeptide: Methylenetetrahydrofolate--tRNA-(uracil-5-)-methyltransferase TrmFO (467 aa).

11–16 (GAGLAG) lines the FAD pocket.

It belongs to the MnmG family. TrmFO subfamily. FAD serves as cofactor.

The protein localises to the cytoplasm. The catalysed reaction is uridine(54) in tRNA + (6R)-5,10-methylene-5,6,7,8-tetrahydrofolate + NADH + H(+) = 5-methyluridine(54) in tRNA + (6S)-5,6,7,8-tetrahydrofolate + NAD(+). The enzyme catalyses uridine(54) in tRNA + (6R)-5,10-methylene-5,6,7,8-tetrahydrofolate + NADPH + H(+) = 5-methyluridine(54) in tRNA + (6S)-5,6,7,8-tetrahydrofolate + NADP(+). In terms of biological role, catalyzes the folate-dependent formation of 5-methyl-uridine at position 54 (M-5-U54) in all tRNAs. The protein is Methylenetetrahydrofolate--tRNA-(uracil-5-)-methyltransferase TrmFO of Prochlorococcus marinus (strain MIT 9303).